A 139-amino-acid chain; its full sequence is MVRTRKWMLSTTIIAMSSSNSEQKVDVAKLSPEEQKLFRLYGRLPQRKDLLVQKLQQGRKYFDSGDYALNKAGKASDSGITCIGKEIPSPDTIPHRVVSAGSPNKEPSLHTKRPSESSPSGASSRRESVTRHDLESNEN.

Residues 83–139 (IGKEIPSPDTIPHRVVSAGSPNKEPSLHTKRPSESSPSGASSRRESVTRHDLESNEN) form a disordered region. Basic and acidic residues predominate over residues 124–139 (SRRESVTRHDLESNEN).

Belongs to the endosulfine family.

It localises to the nucleus. The protein localises to the cytoplasm. In terms of biological role, plays an essential role in initiation of the G0 program by preventing the degradation of specific nutrient-regulated mRNAs via the 5'-3' mRNA decay pathway. The chain is mRNA stability protein mug134 (mug134) from Schizosaccharomyces pombe (strain 972 / ATCC 24843) (Fission yeast).